The following is a 426-amino-acid chain: Probable imidazolonepropionase (426 aa).

4-imidazolone-5-propanoate contacts are provided by tyrosine 158 and histidine 192. Tyrosine 158 lines the N-formimidoyl-L-glutamate pocket. Histidine 260 is a Fe(3+) binding site. Histidine 260 is a Zn(2+) binding site. Glutamate 263 contacts 4-imidazolone-5-propanoate. Residue aspartate 334 coordinates Fe(3+). Aspartate 334 is a Zn(2+) binding site. Asparagine 336 provides a ligand contact to N-formimidoyl-L-glutamate.

The protein belongs to the metallo-dependent hydrolases superfamily. HutI family. The cofactor is Zn(2+). Requires Fe(3+) as cofactor.

The enzyme catalyses 4-imidazolone-5-propanoate + H2O = N-formimidoyl-L-glutamate. Its pathway is amino-acid degradation; L-histidine degradation into L-glutamate; N-formimidoyl-L-glutamate from L-histidine: step 3/3. The polypeptide is Probable imidazolonepropionase (amdhd1) (Dictyostelium discoideum (Social amoeba)).